A 211-amino-acid polypeptide reads, in one-letter code: Uracil phosphoribosyltransferase (211 aa).

Residues Arg79, Arg104, and 131–139 (DPMLATGGS) each bind 5-phospho-alpha-D-ribose 1-diphosphate. Uracil is bound by residues Ile196 and 201–203 (GDA). Residue Asp202 coordinates 5-phospho-alpha-D-ribose 1-diphosphate.

It belongs to the UPRTase family. Mg(2+) serves as cofactor.

It catalyses the reaction UMP + diphosphate = 5-phospho-alpha-D-ribose 1-diphosphate + uracil. It functions in the pathway pyrimidine metabolism; UMP biosynthesis via salvage pathway; UMP from uracil: step 1/1. Its activity is regulated as follows. Allosterically activated by GTP. Its function is as follows. Catalyzes the conversion of uracil and 5-phospho-alpha-D-ribose 1-diphosphate (PRPP) to UMP and diphosphate. The protein is Uracil phosphoribosyltransferase of Limosilactobacillus fermentum (strain NBRC 3956 / LMG 18251) (Lactobacillus fermentum).